Here is a 259-residue protein sequence, read N- to C-terminus: 14-3-3-like protein (259 aa).

This sequence belongs to the 14-3-3 family.

This Helianthus annuus (Common sunflower) protein is 14-3-3-like protein.